A 100-amino-acid chain; its full sequence is Urease subunit gamma (100 aa).

Belongs to the urease gamma subunit family. As to quaternary structure, heterotrimer of UreA (gamma), UreB (beta) and UreC (alpha) subunits. Three heterotrimers associate to form the active enzyme.

It localises to the cytoplasm. It catalyses the reaction urea + 2 H2O + H(+) = hydrogencarbonate + 2 NH4(+). Its pathway is nitrogen metabolism; urea degradation; CO(2) and NH(3) from urea (urease route): step 1/1. This is Urease subunit gamma from Acetivibrio thermocellus (strain ATCC 27405 / DSM 1237 / JCM 9322 / NBRC 103400 / NCIMB 10682 / NRRL B-4536 / VPI 7372) (Clostridium thermocellum).